The chain runs to 79 residues: Sec-independent protein translocase protein TatA (79 aa).

Residues 1–21 (MGGISIWQLLIVALIVVLLFG) form a helical membrane-spanning segment. Positions 43–79 (MSSEEDKKALEDTEAAKTAQTTQQATEKKPESNKEQA) are disordered. The segment covering 46–57 (EEDKKALEDTEA) has biased composition (basic and acidic residues). Low complexity predominate over residues 58 to 67 (AKTAQTTQQA). Residues 68–79 (TEKKPESNKEQA) show a composition bias toward basic and acidic residues.

This sequence belongs to the TatA/E family. The Tat system comprises two distinct complexes: a TatABC complex, containing multiple copies of TatA, TatB and TatC subunits, and a separate TatA complex, containing only TatA subunits. Substrates initially bind to the TatABC complex, which probably triggers association of the separate TatA complex to form the active translocon.

It localises to the cell inner membrane. Its function is as follows. Part of the twin-arginine translocation (Tat) system that transports large folded proteins containing a characteristic twin-arginine motif in their signal peptide across membranes. TatA could form the protein-conducting channel of the Tat system. The sequence is that of Sec-independent protein translocase protein TatA from Shewanella baltica (strain OS223).